Reading from the N-terminus, the 537-residue chain is Ribonuclease III domain-containing protein RNC1, chloroplastic (537 aa).

The transit peptide at 1–51 directs the protein to the chloroplast; sequence MELCSSSPSSSLLRICSSSAPEISFSSSISQFPSKTQSILTKSRFQNLRIC. RNase III domains follow at residues 141–283 and 415–515; these read LLEV…LCFG and EHPR…TIYG.

Interacts with RNA. Part of large ribonucleo-protein particles that contain CAF1 and/or CAF2.

Its subcellular location is the plastid. The protein resides in the chloroplast. Functionally, binds specific group II introns in chloroplasts and facilitates their splicing. Acts on both subgroup IIA and subgroup IIB introns. The substrates of the subgroup II also require the CRM domain proteins CAF1 or CAF2. Binds both single-stranded and double-stranded RNA non-specifically, but lacks endonuclease activity. Required for plastid ribosome biogenesis. This chain is Ribonuclease III domain-containing protein RNC1, chloroplastic, found in Arabidopsis thaliana (Mouse-ear cress).